The sequence spans 325 residues: S-adenosylmethionine carrier 1, chloroplastic/mitochondrial (325 aa).

The N-terminal 38 residues, 1-38 (MAPLTLSVDVKSSSATSHDVSKRVMQSSQLKINKGFFA), are a transit peptide targeting the chloroplast and mitochondrion. 3 Solcar repeats span residues 52 to 124 (RTLF…TKQK), 133 to 215 (LSAV…LCLG), and 228 to 310 (ENAL…TKRT). The next 5 helical transmembrane spans lie at 55–75 (FEGFIAGGTAGVVVETALYPI), 97–117 (YSGLAGNIAGVLPASALFVGV), 132–152 (HLSAVAHLTAGAIGGLAASLI), 230–250 (ALIGAFAGALTGAVTTPLDVI), and 285–305 (GIGPRVLWIGIGGSIFFGVLE).

This sequence belongs to the mitochondrial carrier (TC 2.A.29) family. In terms of tissue distribution, expressed in seedlings, cotyledons, leaves and flowers. Lower levels of expression in stems and roots. Not detected in senescent leaves, petals and pollen grains.

Its subcellular location is the mitochondrion membrane. It is found in the plastid. The protein resides in the chloroplast membrane. Its activity is regulated as follows. Inhibited strongly by tannic acid, bromocresol purple, mercuric chloride, mersalyl, p-hydroxymercuribenzoate, S-adenosylhomocysteine, S-adenosylcysteine and adenosylornithine, and to a lesser extent by N-ethylmaleimide, bathophenanthroline and pyridoxal-5'-P. Transporter involved in exchange reactions through membranes. Has a low uniporter activity. Specifically mediates the transport of S-adenosylmethionine (SAM) and its closest analogs. Probably involved in the uptake of SAM in exchange for S-adenosylhomocysteine (SAHC), which is produced from SAM in the mitochondrial matrix and plastidial stroma by methyltransferase activities. The sequence is that of S-adenosylmethionine carrier 1, chloroplastic/mitochondrial (SAMC1) from Arabidopsis thaliana (Mouse-ear cress).